A 319-amino-acid polypeptide reads, in one-letter code: 33 kDa chaperonin (319 aa).

2 cysteine pairs are disulfide-bonded: Cys-239/Cys-241 and Cys-272/Cys-275. Residues 300-319 (EVSEEMKKAEEKEKEEKNKK) form a disordered region.

Belongs to the HSP33 family. In terms of processing, under oxidizing conditions two disulfide bonds are formed involving the reactive cysteines. Under reducing conditions zinc is bound to the reactive cysteines and the protein is inactive.

It is found in the cytoplasm. Redox regulated molecular chaperone. Protects both thermally unfolding and oxidatively damaged proteins from irreversible aggregation. Plays an important role in the bacterial defense system toward oxidative stress. In Clostridium perfringens (strain ATCC 13124 / DSM 756 / JCM 1290 / NCIMB 6125 / NCTC 8237 / Type A), this protein is 33 kDa chaperonin.